The following is a 52-amino-acid chain: Conotoxin Ac4.3a (52 aa).

The propeptide occupies 1–11 (SDFRNAAVHER). Glutamine 12 bears the Pyrrolidone carboxylic acid mark. Glutamate 14 carries the 4-carboxyglutamate modification. O-linked (HexNAc...) threonine glycosylation is found at threonine 18 and threonine 20. 3 positions are modified to 4-hydroxyproline: proline 28, proline 33, and proline 47. Proline 47 carries the post-translational modification Proline amide. Residues 48-52 (GRRND) constitute a propeptide that is removed on maturation.

The protein belongs to the conotoxin A superfamily. Post-translationally, contains 3 disulfide bonds. Expressed by the venom duct.

It is found in the secreted. In terms of biological role, probable neurotoxin with ion channel inhibitor activity. The sequence is that of Conotoxin Ac4.3a from Conus achatinus (Little frog cone).